The following is a 516-amino-acid chain: Cytochrome P450 1A1 (516 aa).

A mitochondrial targeting signal region spans residues 33–44; the sequence is WQPRVPKGLKSP. Residue Ser71 is glycosylated (O-linked (GlcNAc) serine). Phe228 serves as a coordination point for substrate. Cys461 is a binding site for heme.

It belongs to the cytochrome P450 family. Interacts with cytosolic chaperones HSP70 and HSP90; this interaction is required for initial targeting to mitochondria. Interacts (via mitochondrial targeting signal) with TOMM40 (via N-terminus); this interaction is required for translocation across the mitochondrial outer membrane. It depends on heme as a cofactor.

Its subcellular location is the endoplasmic reticulum membrane. The protein localises to the mitochondrion inner membrane. It localises to the microsome membrane. It is found in the cytoplasm. The catalysed reaction is an organic molecule + reduced [NADPH--hemoprotein reductase] + O2 = an alcohol + oxidized [NADPH--hemoprotein reductase] + H2O + H(+). It carries out the reaction estrone + reduced [NADPH--hemoprotein reductase] + O2 = 2-hydroxyestrone + oxidized [NADPH--hemoprotein reductase] + H2O + H(+). It catalyses the reaction estrone + reduced [NADPH--hemoprotein reductase] + O2 = 4-hydroxyestrone + oxidized [NADPH--hemoprotein reductase] + H2O + H(+). The enzyme catalyses estrone + reduced [NADPH--hemoprotein reductase] + O2 = 6alpha-hydroxyestrone + oxidized [NADPH--hemoprotein reductase] + H2O + H(+). The catalysed reaction is estrone + reduced [NADPH--hemoprotein reductase] + O2 = 15alpha-hydroxyestrone + oxidized [NADPH--hemoprotein reductase] + H2O + H(+). It carries out the reaction estrone + reduced [NADPH--hemoprotein reductase] + O2 = 16alpha-hydroxyestrone + oxidized [NADPH--hemoprotein reductase] + H2O + H(+). It catalyses the reaction 17beta-estradiol + reduced [NADPH--hemoprotein reductase] + O2 = 2-hydroxy-17beta-estradiol + oxidized [NADPH--hemoprotein reductase] + H2O + H(+). The enzyme catalyses 17beta-estradiol + reduced [NADPH--hemoprotein reductase] + O2 = 4-hydroxy-17beta-estradiol + oxidized [NADPH--hemoprotein reductase] + H2O + H(+). The catalysed reaction is 17beta-estradiol + reduced [NADPH--hemoprotein reductase] + O2 = 6alpha-hydroxy-17beta-estradiol + oxidized [NADPH--hemoprotein reductase] + H2O + H(+). It carries out the reaction 17beta-estradiol + reduced [NADPH--hemoprotein reductase] + O2 = 7alpha-hydroxy-17beta-estradiol + oxidized [NADPH--hemoprotein reductase] + H2O + H(+). It catalyses the reaction 17beta-estradiol + reduced [NADPH--hemoprotein reductase] + O2 = 15alpha-hydroxy-17beta-estradiol + oxidized [NADPH--hemoprotein reductase] + H2O + H(+). The enzyme catalyses (5Z,8Z,11Z)-eicosatrienoate + reduced [NADPH--hemoprotein reductase] + O2 = 19-hydroxy-(5Z,8Z,11Z)-eicosatrienoate + oxidized [NADPH--hemoprotein reductase] + H2O + H(+). The catalysed reaction is (5Z,8Z,11Z,14Z)-eicosatetraenoate + reduced [NADPH--hemoprotein reductase] + O2 = 16-hydroxy-(5Z,8Z,11Z,14Z)-eicosatetraenoate + oxidized [NADPH--hemoprotein reductase] + H2O + H(+). It carries out the reaction (5Z,8Z,11Z,14Z)-eicosatetraenoate + reduced [NADPH--hemoprotein reductase] + O2 = 17-hydroxy-(5Z,8Z,11Z,14Z)-eicosatetraenoate + oxidized [NADPH--hemoprotein reductase] + H2O + H(+). It catalyses the reaction (5Z,8Z,11Z,14Z)-eicosatetraenoate + reduced [NADPH--hemoprotein reductase] + O2 = 18-hydroxy-(5Z,8Z,11Z,14Z)-eicosatetraenoate + oxidized [NADPH--hemoprotein reductase] + H2O + H(+). The enzyme catalyses (5Z,8Z,11Z,14Z)-eicosatetraenoate + reduced [NADPH--hemoprotein reductase] + O2 = 19-hydroxy-(5Z,8Z,11Z,14Z)-eicosatetraenoate + oxidized [NADPH--hemoprotein reductase] + H2O + H(+). The catalysed reaction is (5Z,8Z,11Z,14Z,17Z)-eicosapentaenoate + reduced [NADPH--hemoprotein reductase] + O2 = 19-hydroxy-(5Z,8Z,11Z,14Z,17Z)-eicosapentaenoate + oxidized [NADPH--hemoprotein reductase] + H2O + H(+). It carries out the reaction (5Z,8Z,11Z,14Z)-eicosatetraenoate + reduced [NADPH--hemoprotein reductase] + O2 = (8R,9S)-epoxy-(5Z,11Z,14Z)-eicosatrienoate + oxidized [NADPH--hemoprotein reductase] + H2O + H(+). It catalyses the reaction (5Z,8Z,11Z,14Z)-eicosatetraenoate + reduced [NADPH--hemoprotein reductase] + O2 = (11R,12S)-epoxy-(5Z,8Z,14Z)-eicosatrienoate + oxidized [NADPH--hemoprotein reductase] + H2O + H(+). The enzyme catalyses (5Z,8Z,11Z,14Z)-eicosatetraenoate + reduced [NADPH--hemoprotein reductase] + O2 = (14S,15R)-epoxy-(5Z,8Z,11Z)-eicosatrienoate + oxidized [NADPH--hemoprotein reductase] + H2O + H(+). The catalysed reaction is (5Z,8Z,11Z,14Z)-eicosatetraenoate + reduced [NADPH--hemoprotein reductase] + O2 = (14R,15S)-epoxy-(5Z,8Z,11Z)-eicosatrienoate + oxidized [NADPH--hemoprotein reductase] + H2O + H(+). It carries out the reaction (5Z,8Z,11Z,14Z,17Z)-eicosapentaenoate + reduced [NADPH--hemoprotein reductase] + O2 = (17R,18S)-epoxy-(5Z,8Z,11Z,14Z)-eicosatetraenoate + oxidized [NADPH--hemoprotein reductase] + H2O + H(+). It catalyses the reaction (4Z,7Z,10Z,13Z,16Z,19Z)-docosahexaenoate + reduced [NADPH--hemoprotein reductase] + O2 = (19S,20R)-epoxy-(4Z,7Z,10Z,13Z,16Z)-docosapentaenoate + oxidized [NADPH--hemoprotein reductase] + H2O + H(+). The enzyme catalyses (4Z,7Z,10Z,13Z,16Z,19Z)-docosahexaenoate + reduced [NADPH--hemoprotein reductase] + O2 = (19R,20S)-epoxy-(4Z,7Z,10Z,13Z,16Z)-docosapentaenoate + oxidized [NADPH--hemoprotein reductase] + H2O + H(+). The catalysed reaction is all-trans-retinol + reduced [NADPH--hemoprotein reductase] + O2 = all-trans-retinal + oxidized [NADPH--hemoprotein reductase] + 2 H2O + H(+). It carries out the reaction all-trans-retinal + reduced [NADPH--hemoprotein reductase] + O2 = all-trans-retinoate + oxidized [NADPH--hemoprotein reductase] + H2O + 2 H(+). It catalyses the reaction (13S)-hydroperoxy-(9Z,11E)-octadecadienoate = 13-oxo-(9Z,11E)-octadecadienoate + H2O. The enzyme catalyses (12S)-hydroperoxy-(5Z,8Z,10E,14Z)-eicosatetraenoate = 12-oxo-(5Z,8Z,10E,14Z)-eicosatetraenoate + H2O. The catalysed reaction is (15S)-hydroperoxy-(5Z,8Z,11Z,13E)-eicosatetraenoate = 15-oxo-(5Z,8Z,11Z,13E)-eicosatetraenoate + H2O. It carries out the reaction (5S)-hydroperoxy-(6E,8Z,11Z,14Z)-eicosatetraenoate = 5-oxo-(6E,8Z,11Z,14Z)-eicosatetraenoate + H2O. Its pathway is steroid hormone biosynthesis. It functions in the pathway lipid metabolism; fatty acid metabolism. The protein operates within cofactor metabolism; retinol metabolism. A cytochrome P450 monooxygenase involved in the metabolism of various endogenous substrates, including fatty acids, steroid hormones and vitamins. Mechanistically, uses molecular oxygen inserting one oxygen atom into a substrate, and reducing the second into a water molecule, with two electrons provided by NADPH via cytochrome P450 reductase (CPR; NADPH-ferrihemoprotein reductase). Catalyzes the hydroxylation of carbon-hydrogen bonds. Exhibits high catalytic activity for the formation of hydroxyestrogens from estrone (E1) and 17beta-estradiol (E2), namely 2-hydroxy E1 and E2, as well as D-ring hydroxylated E1 and E2 at the C15alpha and C16alpha positions. Displays different regioselectivities for polyunsaturated fatty acids (PUFA) hydroxylation. Catalyzes the epoxidation of double bonds of certain PUFA. Converts arachidonic acid toward epoxyeicosatrienoic acid (EET) regioisomers, 8,9-, 11,12-, and 14,15-EET, that function as lipid mediators in the vascular system. Displays an absolute stereoselectivity in the epoxidation of eicosapentaenoic acid (EPA) producing the 17(R),18(S) enantiomer. May play an important role in all-trans retinoic acid biosynthesis in extrahepatic tissues. Catalyzes two successive oxidative transformation of all-trans retinol to all-trans retinal and then to the active form all-trans retinoic acid. May also participate in eicosanoids metabolism by converting hydroperoxide species into oxo metabolites (lipoxygenase-like reaction, NADPH-independent). This is Cytochrome P450 1A1 (CYP1A1) from Balaenoptera acutorostrata (Common minke whale).